The sequence spans 859 residues: MQEQYIHSEIEAEVQKYWADNKTFEVTEDPAKEKFYCLSMFPYPSGRLHMGHVRNYTIGDVVARFQRLQGKNVLQPIGWDAFGLPAENAAIKNATAPAPWTYENIDYMKNQLKMLGFGYDWSREIATCTPEYYRWEQWFFTKLYEKGLVYKKTSAVNWCPNDQTVLANEQVQDGCCWRCDTPVEQKEIPQWFIKITAYAEELLNDIDNLEGWPEQVKTMQRNWIGRSEGVEMTFKVKDSDDSFDIYTTRPDTVMGVTYVAIAAGHPLAEKAALNNPELAAFVEECKQSGTSEAELATMEKKGVATGLYAIHPLTGEEVPVWAANFVLMNYGTGAVMSVPAHDQRDYEFAKKYGLALKAVIKPADGEVDISEAAYTEKGVLFNSAEFDGLDFDGAFNAIADKLAAEGKGKRQVNFRLRDWGVSRQRYWGAPIPMVTLEDGTVMPTPEDQLPVILPEDVVMDGVQSPIKADKEWAKTQVNGQDALRETDTFDTFMESSWYYARYCSPKANEMLDPAKANYWLPVDQYIGGIEHACMHLLYFRFFHKLLRDAGLVNSNEPAKRLLTQGMVLADAFYYNNEKGARVWVSPLDVTVVEKDDKGRILKAVDTEGHELVYTGMSKMSKSKNNGIDPQVMVEKYGADTVRLFMMFASPPELTLEWQESGVEGAHRFIKRLWKLASEYSAAPATEALDVSALNADQKTLRRELHKTIAKVTDDLGRRQMFNTAVAAVMELMNHLQKAPLASAQDKALMNEALSAVVRLLYPIAPHVCFNLWRELGNSGAIEDAGWPATDESALVEDSKLIVVQVNGKVRAKLTVAADATKEQVEALGLAEDAVRKYTDGVTVRKVIYVPGKLLNIVAN.

The short motif at 42 to 52 is the 'HIGH' region element; the sequence is PYPSGRLHMGH. The 'KMSKS' region signature appears at 618-622; sequence KMSKS. Lysine 621 is a binding site for ATP.

It belongs to the class-I aminoacyl-tRNA synthetase family.

The protein localises to the cytoplasm. The catalysed reaction is tRNA(Leu) + L-leucine + ATP = L-leucyl-tRNA(Leu) + AMP + diphosphate. The protein is Leucine--tRNA ligase of Shewanella amazonensis (strain ATCC BAA-1098 / SB2B).